The primary structure comprises 491 residues: UDP-N-acetylmuramate--L-alanine ligase (491 aa).

An ATP-binding site is contributed by 126–132 (GTHGKTT).

The protein belongs to the MurCDEF family.

Its subcellular location is the cytoplasm. It carries out the reaction UDP-N-acetyl-alpha-D-muramate + L-alanine + ATP = UDP-N-acetyl-alpha-D-muramoyl-L-alanine + ADP + phosphate + H(+). It participates in cell wall biogenesis; peptidoglycan biosynthesis. In terms of biological role, cell wall formation. The sequence is that of UDP-N-acetylmuramate--L-alanine ligase from Shigella sonnei (strain Ss046).